The sequence spans 1018 residues: 2-oxoglutarate dehydrogenase-like, mitochondrial (1018 aa).

3 residues coordinate Ca(2+): histidine 138, aspartate 151, and aspartate 153. Thiamine diphosphate-binding residues include arginine 307, aspartate 406, asparagine 439, isoleucine 441, and glutamine 671. 3 residues coordinate Mg(2+): aspartate 406, asparagine 439, and isoleucine 441.

It belongs to the alpha-ketoglutarate dehydrogenase family. The OGDHC complex comprises multiple copies of three catalytic enzyme components, the 2-oxoglutarate dehydrogenase (OGDH/E1), the dihydrolipoamide dehydrogenase (DLST/E2) and the dihydrolipoamide dehydrogenase (DLD/E3). OGDHL/E1-like isoenzyme may replace OGDH in the OGDHC complex in the brain. Requires thiamine diphosphate as cofactor. Mg(2+) is required as a cofactor.

The protein resides in the mitochondrion matrix. It carries out the reaction N(6)-[(R)-lipoyl]-L-lysyl-[protein] + 2-oxoglutarate + H(+) = N(6)-[(R)-S(8)-succinyldihydrolipoyl]-L-lysyl-[protein] + CO2. Its function is as follows. 2-oxoglutarate dehydrogenase (E1-like) component of the 2-oxoglutarate dehydrogenase multienzyme complex (OGDHC) which mediates the decarboxylation of alpha-ketoglutarate in the tricarboxylic acid cycle. The OGDHC complex catalyzes the overall conversion of 2-oxoglutarate to succinyl-CoA and CO(2) while reducing NAD(+) to NADH. The OGDHC complex is mainly active in the mitochondrion. Involved in the inhibition of cell proliferation and in apoptosis. The sequence is that of 2-oxoglutarate dehydrogenase-like, mitochondrial (ogdhl) from Xenopus laevis (African clawed frog).